Consider the following 698-residue polypeptide: Serotransferrin (698 aa).

The first 19 residues, 1–19 (MRLAVGALLVCAVLGLCLA), serve as a signal peptide directing secretion. Transferrin-like domains are found at residues 25-347 (VRWC…NLRE) and 361-683 (VKWC…NLRK). 2 cysteine pairs are disulfide-bonded: Cys28–Cys67 and Cys38–Cys58. Arg42 carries the dimethylated arginine modification. O-linked (GalNAc...) serine glycosylation occurs at Ser51. Residues Asp82 and Tyr114 each contribute to the Fe(3+) site. 17 disulfide bridges follow: Cys137-Cys213, Cys156-Cys350, Cys177-Cys193, Cys180-Cys198, Cys190-Cys196, Cys246-Cys260, Cys358-Cys615, Cys364-Cys396, Cys374-Cys387, Cys421-Cys693, Cys437-Cys656, Cys469-Cys542, Cys493-Cys684, Cys503-Cys517, Cys514-Cys525, Cys582-Cys596, and Cys634-Cys639. Residues Thr139, Arg143, Ala145, and Gly146 each coordinate hydrogencarbonate. Tyr207 contacts Fe(3+). Residue His268 participates in Fe(3+) binding. Ser389 carries the post-translational modification Phosphoserine; by FAM20C. Asp411 serves as a coordination point for Fe(3+). N-linked (GlcNAc...) (complex) asparagine glycosylation is present at Asn432. Tyr445 contacts Fe(3+). The hydrogencarbonate site is built by Thr471, Arg475, Ala477, and Gly478. N-linked (GlcNAc...) asparagine; atypical; partial glycosylation is present at Asn491. Tyr536 lines the Fe(3+) pocket. Fe(3+) is bound at residue His604. A glycan (N-linked (GlcNAc...) (complex) asparagine) is linked at Asn630. Ser685 carries the phosphoserine; by FAM20C modification.

It belongs to the transferrin family. Monomer. Part of a complex composed of SLC40A1/ferroportin, TF/transferrin and HEPH/hephaestin that transfers iron from cells to transferrin. In terms of assembly, (Microbial infection) Binds to Neisseria transferrin-binding protein A (tbpA or tbp1). Forms a large complex with TbpA and TbpB. As to quaternary structure, (Microbial infection) Binds to Neisseria transferrin-binding protein B (tbpb or tbp2). In terms of tissue distribution, expressed by the liver and secreted in plasma.

The protein localises to the secreted. Transferrins are iron binding transport proteins which can bind two Fe(3+) ions in association with the binding of an anion, usually bicarbonate. It is responsible for the transport of iron from sites of absorption and heme degradation to those of storage and utilization. Serum transferrin may also have a further role in stimulating cell proliferation. Functionally, (Microbial infection) Serves as an iron source for Neisseria species, which capture the protein and extract its iron for their own use. In terms of biological role, (Microbial infection) Serves as an iron source for parasite T.brucei (strain 427), which capture TF via its own transferrin receptor ESAG6:ESAG7 and extract its iron for its own use. This Homo sapiens (Human) protein is Serotransferrin.